Here is a 221-residue protein sequence, read N- to C-terminus: Type II secretion system protein J (221 aa).

Positions 1 to 15 (MWRTNQVSSRQNMAG) are cleaved as a propeptide — leader sequence. Phe16 is subject to N-methylphenylalanine. A helical membrane pass occupies residues 16-36 (FTLIEVLVAIAIFASLSVGAY).

The protein belongs to the GSP J family. As to quaternary structure, type II secretion is composed of four main components: the outer membrane complex, the inner membrane complex, the cytoplasmic secretion ATPase and the periplasm-spanning pseudopilus. Interacts with core component epsG. Post-translationally, cleaved by prepilin peptidase. In terms of processing, methylated by prepilin peptidase at the amino group of the N-terminal phenylalanine once the leader sequence is cleaved by prepilin peptidase.

It localises to the cell inner membrane. Component of the type II secretion system required for the energy-dependent secretion of extracellular factors such as proteases and toxins from the periplasm. Part of the pseudopilus tip complex that is critical for the recognition and binding of secretion substrates. This chain is Type II secretion system protein J (epsJ), found in Vibrio cholerae serotype O1 (strain ATCC 39315 / El Tor Inaba N16961).